We begin with the raw amino-acid sequence, 451 residues long: CCAAT/enhancer-binding protein (451 aa).

Disordered stretches follow at residues 210–236, 267–298, and 328–389; these read TYNN…EPID, QSNN…NSTN, and LKHH…AKVR. Composition is skewed to low complexity over residues 218–228, 268–298, and 334–350; these read ENSSVGSDSSS, SNNL…NSTN, and LQQT…QHAQ. Residues 359–370 show a composition bias toward basic and acidic residues; that stretch reads KHVDKGTEEYRR. Residues 365-428 form the bZIP domain; that stretch reads TEEYRRRRER…SLHKQIYMQL (64 aa). The basic motif stretch occupies residues 369–398; it reads RRRRERNNIAVRKSREKAKVRSKEVEERVK. A leucine-zipper region spans residues 400–407; it reads LLKEKDAL.

This sequence belongs to the bZIP family. C/EBP subfamily. As to quaternary structure, binds DNA as a dimer and can form stable heterodimers.

It is found in the nucleus. In terms of biological role, may be required for the expression of gene products mediating border cell migration. Among the DNA sequences that this protein binds with high affinity is a conserved site within the promoter of its gene. The protein is CCAAT/enhancer-binding protein (slbo) of Drosophila virilis (Fruit fly).